The following is a 309-amino-acid chain: ATP synthase gamma chain (309 aa).

The protein belongs to the ATPase gamma chain family. In terms of assembly, F-type ATPases have 2 components, CF(1) - the catalytic core - and CF(0) - the membrane proton channel. CF(1) has five subunits: alpha(3), beta(3), gamma(1), delta(1), epsilon(1). CF(0) has three main subunits: a, b and c.

It is found in the cell membrane. Functionally, produces ATP from ADP in the presence of a proton gradient across the membrane. The gamma chain is believed to be important in regulating ATPase activity and the flow of protons through the CF(0) complex. This is ATP synthase gamma chain from Salinispora tropica (strain ATCC BAA-916 / DSM 44818 / JCM 13857 / NBRC 105044 / CNB-440).